Reading from the N-terminus, the 220-residue chain is Adenylate kinase (220 aa).

10–15 (GAGKGT) lines the ATP pocket. An NMP region spans residues 30-59 (STGDMLRAAVKAGSPLGVEAKGYMDAGKLV). AMP contacts are provided by residues T31, R36, 57–59 (KLV), 85–88 (GFPR), and Q92. Residues 122–150 (GRRTHPASGRTYHVKFNPPKVEGKDDVTG) form a disordered region. Residues 122–159 (GRRTHPASGRTYHVKFNPPKVEGKDDVTGEPLIQRDDD) form an LID region. ATP contacts are provided by residues R123 and 132 to 133 (TY). AMP is bound by residues R156 and R167. Position 206 (G206) interacts with ATP.

It belongs to the adenylate kinase family. As to quaternary structure, monomer.

The protein localises to the cytoplasm. The enzyme catalyses AMP + ATP = 2 ADP. It participates in purine metabolism; AMP biosynthesis via salvage pathway; AMP from ADP: step 1/1. Catalyzes the reversible transfer of the terminal phosphate group between ATP and AMP. Plays an important role in cellular energy homeostasis and in adenine nucleotide metabolism. In Burkholderia ambifaria (strain MC40-6), this protein is Adenylate kinase.